The sequence spans 205 residues: Ribosomal RNA small subunit methyltransferase G (205 aa).

Residues Gly73, Leu78, 124-125 (VE), and Arg139 each bind S-adenosyl-L-methionine.

Belongs to the methyltransferase superfamily. RNA methyltransferase RsmG family.

The protein resides in the cytoplasm. It carries out the reaction guanosine(527) in 16S rRNA + S-adenosyl-L-methionine = N(7)-methylguanosine(527) in 16S rRNA + S-adenosyl-L-homocysteine. Functionally, specifically methylates the N7 position of guanine in position 527 of 16S rRNA. The polypeptide is Ribosomal RNA small subunit methyltransferase G (Methylobacillus flagellatus (strain ATCC 51484 / DSM 6875 / VKM B-1610 / KT)).